The sequence spans 227 residues: Probable 2-phosphosulfolactate phosphatase (227 aa).

The protein belongs to the ComB family. Mg(2+) is required as a cofactor.

It carries out the reaction (2R)-O-phospho-3-sulfolactate + H2O = (2R)-3-sulfolactate + phosphate. This Thermotoga petrophila (strain ATCC BAA-488 / DSM 13995 / JCM 10881 / RKU-1) protein is Probable 2-phosphosulfolactate phosphatase.